A 211-amino-acid chain; its full sequence is Large ribosomal subunit protein eL13 (211 aa).

Lysine 16 carries the N6-acetyllysine modification. Phosphoserine occurs at positions 52, 77, and 106. Glycyl lysine isopeptide (Lys-Gly) (interchain with G-Cter in SUMO2) cross-links involve residues lysine 123 and lysine 145. Lysine 174 is covalently cross-linked (Glycyl lysine isopeptide (Lys-Gly) (interchain with G-Cter in SUMO1); alternate). Glycyl lysine isopeptide (Lys-Gly) (interchain with G-Cter in SUMO2); alternate cross-links involve residues lysine 174 and lysine 177. Residue lysine 177 is modified to N6-acetyllysine; alternate.

The protein belongs to the eukaryotic ribosomal protein eL13 family. In terms of assembly, component of the 60S large ribosomal subunit (LSU).

It is found in the cytoplasm. Functionally, component of the ribosome, a large ribonucleoprotein complex responsible for the synthesis of proteins in the cell. The small ribosomal subunit (SSU) binds messenger RNAs (mRNAs) and translates the encoded message by selecting cognate aminoacyl-transfer RNA (tRNA) molecules. The large subunit (LSU) contains the ribosomal catalytic site termed the peptidyl transferase center (PTC), which catalyzes the formation of peptide bonds, thereby polymerizing the amino acids delivered by tRNAs into a polypeptide chain. The nascent polypeptides leave the ribosome through a tunnel in the LSU and interact with protein factors that function in enzymatic processing, targeting, and the membrane insertion of nascent chains at the exit of the ribosomal tunnel. As part of the LSU, it is probably required for its formation and the maturation of rRNAs. Plays a role in bone development. In Rattus norvegicus (Rat), this protein is Large ribosomal subunit protein eL13 (Rpl13).